Here is a 216-residue protein sequence, read N- to C-terminus: Cytochrome c biogenesis ATP-binding export protein CcmA (216 aa).

An ABC transporter domain is found at L18–A216. An ATP-binding site is contributed by G50–T57.

This sequence belongs to the ABC transporter superfamily. CcmA exporter (TC 3.A.1.107) family. In terms of assembly, the complex is composed of two ATP-binding proteins (CcmA) and two transmembrane proteins (CcmB).

It is found in the cell inner membrane. It catalyses the reaction heme b(in) + ATP + H2O = heme b(out) + ADP + phosphate + H(+). Part of the ABC transporter complex CcmAB involved in the biogenesis of c-type cytochromes; once thought to export heme, this seems not to be the case, but its exact role is uncertain. Responsible for energy coupling to the transport system. In Nitrosococcus oceani (strain ATCC 19707 / BCRC 17464 / JCM 30415 / NCIMB 11848 / C-107), this protein is Cytochrome c biogenesis ATP-binding export protein CcmA.